The sequence spans 189 residues: Coatomer subunit zeta (189 aa).

Belongs to the adaptor complexes small subunit family. Oligomeric complex that consists of at least the alpha, beta, beta', gamma, delta, epsilon and zeta subunits.

It is found in the cytoplasm. The protein resides in the golgi apparatus membrane. The protein localises to the cytoplasmic vesicle. It localises to the COPI-coated vesicle membrane. The coatomer is a cytosolic protein complex that binds to dilysine motifs and reversibly associates with Golgi non-clathrin-coated vesicles, which further mediate biosynthetic protein transport from the ER, via the Golgi up to the trans Golgi network. Coatomer complex is required for budding from Golgi membranes, and is essential for the retrograde Golgi-to-ER transport of dilysine-tagged proteins. The zeta subunit may be involved in regulating the coat assembly and, hence, the rate of biosynthetic protein transport due to its association-dissociation properties with the coatomer complex. The chain is Coatomer subunit zeta (RET3) from Saccharomyces cerevisiae (strain ATCC 204508 / S288c) (Baker's yeast).